Consider the following 359-residue polypeptide: Peptide chain release factor 1 (359 aa).

Gln-236 carries the post-translational modification N5-methylglutamine.

This sequence belongs to the prokaryotic/mitochondrial release factor family. Methylated by PrmC. Methylation increases the termination efficiency of RF1.

It localises to the cytoplasm. In terms of biological role, peptide chain release factor 1 directs the termination of translation in response to the peptide chain termination codons UAG and UAA. In Streptococcus pyogenes serotype M18 (strain MGAS8232), this protein is Peptide chain release factor 1.